We begin with the raw amino-acid sequence, 112 residues long: uncharacterized protein (112 aa).

This is an uncharacterized protein from Escherichia coli.